The chain runs to 282 residues: Large ribosomal subunit protein uL2 (282 aa).

Residues 223 to 282 (TVRGSVMNPNDHPHGGGEGRAPIGRKSPVTPWGKKALGVKTRNTKKTSEKLIVRKRSNKK) are disordered.

This sequence belongs to the universal ribosomal protein uL2 family. As to quaternary structure, part of the 50S ribosomal subunit. Forms a bridge to the 30S subunit in the 70S ribosome.

Its function is as follows. One of the primary rRNA binding proteins. Required for association of the 30S and 50S subunits to form the 70S ribosome, for tRNA binding and peptide bond formation. It has been suggested to have peptidyltransferase activity; this is somewhat controversial. Makes several contacts with the 16S rRNA in the 70S ribosome. This chain is Large ribosomal subunit protein uL2, found in Mycoplasma mycoides subsp. mycoides SC (strain CCUG 32753 / NCTC 10114 / PG1).